The chain runs to 416 residues: 4-hydroxy-3-methylbut-2-en-1-yl diphosphate synthase (flavodoxin) (416 aa).

[4Fe-4S] cluster is bound by residues cysteine 304, cysteine 307, cysteine 350, and glutamate 357.

This sequence belongs to the IspG family. It depends on [4Fe-4S] cluster as a cofactor.

The enzyme catalyses (2E)-4-hydroxy-3-methylbut-2-enyl diphosphate + oxidized [flavodoxin] + H2O + 2 H(+) = 2-C-methyl-D-erythritol 2,4-cyclic diphosphate + reduced [flavodoxin]. It participates in isoprenoid biosynthesis; isopentenyl diphosphate biosynthesis via DXP pathway; isopentenyl diphosphate from 1-deoxy-D-xylulose 5-phosphate: step 5/6. Converts 2C-methyl-D-erythritol 2,4-cyclodiphosphate (ME-2,4cPP) into 1-hydroxy-2-methyl-2-(E)-butenyl 4-diphosphate. The polypeptide is 4-hydroxy-3-methylbut-2-en-1-yl diphosphate synthase (flavodoxin) (Burkholderia pseudomallei (strain K96243)).